The sequence spans 359 residues: DNA polymerase IV (359 aa).

One can recognise a UmuC domain in the interval 6–186 (IIHVDMDAFY…LPIEAFWGVG (181 aa)). Mg(2+)-binding residues include Asp-10 and Asp-104. Glu-105 is an active-site residue.

It belongs to the DNA polymerase type-Y family. Monomer. Mg(2+) is required as a cofactor.

The protein resides in the cytoplasm. It catalyses the reaction DNA(n) + a 2'-deoxyribonucleoside 5'-triphosphate = DNA(n+1) + diphosphate. Its function is as follows. Poorly processive, error-prone DNA polymerase involved in untargeted mutagenesis. Copies undamaged DNA at stalled replication forks, which arise in vivo from mismatched or misaligned primer ends. These misaligned primers can be extended by PolIV. Exhibits no 3'-5' exonuclease (proofreading) activity. May be involved in translesional synthesis, in conjunction with the beta clamp from PolIII. In Akkermansia muciniphila (strain ATCC BAA-835 / DSM 22959 / JCM 33894 / BCRC 81048 / CCUG 64013 / CIP 107961 / Muc), this protein is DNA polymerase IV.